We begin with the raw amino-acid sequence, 249 residues long: 2,3-bisphosphoglycerate-dependent phosphoglycerate mutase (249 aa).

Residues 10–17, 23–24, arginine 62, 89–92, lysine 100, 116–117, and 185–186 contribute to the substrate site; these read RHGESEWN, TG, ERHY, RR, and GN. Histidine 11 functions as the Tele-phosphohistidine intermediate in the catalytic mechanism. Glutamate 89 (proton donor/acceptor) is an active-site residue.

The protein belongs to the phosphoglycerate mutase family. BPG-dependent PGAM subfamily. As to quaternary structure, homodimer.

It catalyses the reaction (2R)-2-phosphoglycerate = (2R)-3-phosphoglycerate. It participates in carbohydrate degradation; glycolysis; pyruvate from D-glyceraldehyde 3-phosphate: step 3/5. Functionally, catalyzes the interconversion of 2-phosphoglycerate and 3-phosphoglycerate. This chain is 2,3-bisphosphoglycerate-dependent phosphoglycerate mutase, found in Hamiltonella defensa subsp. Acyrthosiphon pisum (strain 5AT).